The chain runs to 357 residues: GTPase Obg (357 aa).

Residues 1 to 159 form the Obg domain; the sequence is MKFVDEAEIQ…RTLKLELKLL (159 aa). Positions 160-343 constitute an OBG-type G domain; that stretch reads ADIGMLGFPN…IMKSAMTLFE (184 aa). GTP contacts are provided by residues 166-173, 191-195, 213-216, 293-296, and 324-326; these read GFPNVGKS, FTTLY, DVPG, NKAD, and SAV. Residues Ser-173 and Thr-193 each coordinate Mg(2+).

This sequence belongs to the TRAFAC class OBG-HflX-like GTPase superfamily. OBG GTPase family. Monomer. It depends on Mg(2+) as a cofactor.

It is found in the cytoplasm. Functionally, an essential GTPase which binds GTP, GDP and possibly (p)ppGpp with moderate affinity, with high nucleotide exchange rates and a fairly low GTP hydrolysis rate. Plays a role in control of the cell cycle, stress response, ribosome biogenesis and in those bacteria that undergo differentiation, in morphogenesis control. This chain is GTPase Obg, found in Xylella fastidiosa (strain M23).